Here is a 193-residue protein sequence, read N- to C-terminus: Crossover junction endodeoxyribonuclease RuvC (193 aa).

Catalysis depends on residues aspartate 7, glutamate 68, and aspartate 141. Positions 7, 68, and 141 each coordinate Mg(2+).

Belongs to the RuvC family. In terms of assembly, homodimer which binds Holliday junction (HJ) DNA. The HJ becomes 2-fold symmetrical on binding to RuvC with unstacked arms; it has a different conformation from HJ DNA in complex with RuvA. In the full resolvosome a probable DNA-RuvA(4)-RuvB(12)-RuvC(2) complex forms which resolves the HJ. Requires Mg(2+) as cofactor.

The protein resides in the cytoplasm. The enzyme catalyses Endonucleolytic cleavage at a junction such as a reciprocal single-stranded crossover between two homologous DNA duplexes (Holliday junction).. The RuvA-RuvB-RuvC complex processes Holliday junction (HJ) DNA during genetic recombination and DNA repair. Endonuclease that resolves HJ intermediates. Cleaves cruciform DNA by making single-stranded nicks across the HJ at symmetrical positions within the homologous arms, yielding a 5'-phosphate and a 3'-hydroxyl group; requires a central core of homology in the junction. The consensus cleavage sequence is 5'-(A/T)TT(C/G)-3'. Cleavage occurs on the 3'-side of the TT dinucleotide at the point of strand exchange. HJ branch migration catalyzed by RuvA-RuvB allows RuvC to scan DNA until it finds its consensus sequence, where it cleaves and resolves the cruciform DNA. The chain is Crossover junction endodeoxyribonuclease RuvC from Renibacterium salmoninarum (strain ATCC 33209 / DSM 20767 / JCM 11484 / NBRC 15589 / NCIMB 2235).